Consider the following 263-residue polypeptide: Ubiquitin domain-containing protein 7SL RNA2 (263 aa).

One can recognise a Ubiquitin-like 1 domain in the interval 1 to 53; it reads MNVDIDTETGSSFSITIDFGETVLQIKEKIEKSQGIPVSKQILYLDGKALEDD. The segment at 74 to 93 is disordered; it reads ADPNQSNEQTEQSKQIDDKK. A compositionally biased stretch (polar residues) spans 76 to 86; it reads PNQSNEQTEQS. Positions 184–263 constitute a Ubiquitin-like 2 domain; that stretch reads FTVHVKPYQE…GDTIELIREK (80 aa).

It belongs to the ubiquitin family. As to expression, expressed in seedlings, roots, stems, rosettes and flowers (at protein level).

It is found in the nucleus. Its function is as follows. Controls phase transition from the vegetative to the reproductive state. Involved in the maintenance of the shoot apical meristem (SAM) thus preventing inflorescence meristem (IM) formation and subsequent inflorescence stem development during flowering. Regulates leaf and organ morphology. The protein is Ubiquitin domain-containing protein 7SL RNA2 of Arabidopsis thaliana (Mouse-ear cress).